A 404-amino-acid chain; its full sequence is Cysteine desulfurase IscS (404 aa).

Residues 75–76 (AT), N155, Q183, and 203–205 (SAH) each bind pyridoxal 5'-phosphate. K206 is subject to N6-(pyridoxal phosphate)lysine. T243 contributes to the pyridoxal 5'-phosphate binding site. The active-site Cysteine persulfide intermediate is C328. C328 contacts [2Fe-2S] cluster.

The protein belongs to the class-V pyridoxal-phosphate-dependent aminotransferase family. NifS/IscS subfamily. As to quaternary structure, homodimer. Forms a heterotetramer with IscU, interacts with other sulfur acceptors. Requires pyridoxal 5'-phosphate as cofactor.

Its subcellular location is the cytoplasm. It carries out the reaction (sulfur carrier)-H + L-cysteine = (sulfur carrier)-SH + L-alanine. It functions in the pathway cofactor biosynthesis; iron-sulfur cluster biosynthesis. In terms of biological role, master enzyme that delivers sulfur to a number of partners involved in Fe-S cluster assembly, tRNA modification or cofactor biosynthesis. Catalyzes the removal of elemental sulfur atoms from cysteine to produce alanine. Functions as a sulfur delivery protein for Fe-S cluster synthesis onto IscU, an Fe-S scaffold assembly protein, as well as other S acceptor proteins. The polypeptide is Cysteine desulfurase IscS (Aeromonas salmonicida (strain A449)).